Here is a 1043-residue protein sequence, read N- to C-terminus: Liprin-alpha-4 (1043 aa).

2 coiled-coil regions span residues glutamate 24–glycine 332 and isoleucine 426–serine 470. The segment at serine 498 to isoleucine 617 is disordered. Serine 500 carries the post-translational modification Phosphoserine. Residues glycine 505 to alanine 516 show a composition bias toward polar residues. Serine 541 bears the Phosphoserine mark. Residues serine 544 to isoleucine 555 are compositionally biased toward basic and acidic residues. Low complexity predominate over residues glutamine 590–aspartate 602. SAM domains follow at residues tryptophan 688–leucine 754, asparagine 803–leucine 867, and tryptophan 891–leucine 960. A coiled-coil region spans residues leucine 864–valine 890.

Belongs to the liprin family. Liprin-alpha subfamily. Forms homodimers and heterodimers with liprins-alpha and liprins-beta. Interacts with the second PTPase domain of PTPRD, PTPRF and PTPRS. Interacts with RIMS1 and RIMS2. Interacts with GIT1 and GIT2. Interacts with GRIP1. Interacts with KIF1A.

The protein localises to the cytoplasm. The protein resides in the cell surface. In terms of biological role, may regulate the disassembly of focal adhesions. May localize receptor-like tyrosine phosphatases type 2A at specific sites on the plasma membrane, possibly regulating their interaction with the extracellular environment and their association with substrates. The polypeptide is Liprin-alpha-4 (Ppfia4) (Rattus norvegicus (Rat)).